Consider the following 113-residue polypeptide: Hydrogenase maturation factor HypA (113 aa).

Histidine 2 contributes to the Ni(2+) binding site. Zn(2+) is bound by residues cysteine 73, cysteine 76, cysteine 89, and cysteine 92.

Belongs to the HypA/HybF family.

Its function is as follows. Involved in the maturation of [NiFe] hydrogenases. Required for nickel insertion into the metal center of the hydrogenase. The protein is Hydrogenase maturation factor HypA of Albidiferax ferrireducens (strain ATCC BAA-621 / DSM 15236 / T118) (Rhodoferax ferrireducens).